The primary structure comprises 281 residues: Acetyl-coenzyme A carboxylase carboxyl transferase subunit beta (281 aa).

A disordered region spans residues 1-23 (MAWFKREKKGISTSTEEKKEAPD). The region spanning 25–281 (LWNKCPNCKK…LAAFLKMMKN (257 aa)) is the CoA carboxyltransferase N-terminal domain. 4 residues coordinate Zn(2+): Cys-29, Cys-32, Cys-48, and Cys-51. The C4-type zinc-finger motif lies at 29–51 (CPNCKKALHSADLLENKYVCQYC).

It belongs to the AccD/PCCB family. Acetyl-CoA carboxylase is a heterohexamer composed of biotin carboxyl carrier protein (AccB), biotin carboxylase (AccC) and two subunits each of ACCase subunit alpha (AccA) and ACCase subunit beta (AccD). The cofactor is Zn(2+).

It is found in the cytoplasm. It catalyses the reaction N(6)-carboxybiotinyl-L-lysyl-[protein] + acetyl-CoA = N(6)-biotinyl-L-lysyl-[protein] + malonyl-CoA. Its pathway is lipid metabolism; malonyl-CoA biosynthesis; malonyl-CoA from acetyl-CoA: step 1/1. Functionally, component of the acetyl coenzyme A carboxylase (ACC) complex. Biotin carboxylase (BC) catalyzes the carboxylation of biotin on its carrier protein (BCCP) and then the CO(2) group is transferred by the transcarboxylase to acetyl-CoA to form malonyl-CoA. The sequence is that of Acetyl-coenzyme A carboxylase carboxyl transferase subunit beta from Pedobacter heparinus (strain ATCC 13125 / DSM 2366 / CIP 104194 / JCM 7457 / NBRC 12017 / NCIMB 9290 / NRRL B-14731 / HIM 762-3).